We begin with the raw amino-acid sequence, 208 residues long: Protein-L-isoaspartate O-methyltransferase (208 aa).

The active site involves S59.

This sequence belongs to the methyltransferase superfamily. L-isoaspartyl/D-aspartyl protein methyltransferase family.

The protein localises to the cytoplasm. The catalysed reaction is [protein]-L-isoaspartate + S-adenosyl-L-methionine = [protein]-L-isoaspartate alpha-methyl ester + S-adenosyl-L-homocysteine. Its function is as follows. Catalyzes the methyl esterification of L-isoaspartyl residues in peptides and proteins that result from spontaneous decomposition of normal L-aspartyl and L-asparaginyl residues. It plays a role in the repair and/or degradation of damaged proteins. In Aliivibrio salmonicida (strain LFI1238) (Vibrio salmonicida (strain LFI1238)), this protein is Protein-L-isoaspartate O-methyltransferase.